We begin with the raw amino-acid sequence, 928 residues long: DNA polymerase I (928 aa).

In terms of domain architecture, 5'-3' exonuclease spans 1 to 323; sequence MVQIPENPLI…IDESPSEPAA (323 aa). The 3'-5' exonuclease domain maps to 324–517; that stretch reads ALSYENYVTI…LHLKMWPELQ (194 aa). Positions 324-928 are klenow fragment; that stretch reads ALSYENYVTI…GSGENWDQAH (605 aa). The interval 521–928 is polymerase; sequence GPLNVFENIE…GSGENWDQAH (408 aa).

This sequence belongs to the DNA polymerase type-A family. In terms of assembly, single-chain monomer with multiple functions.

It carries out the reaction DNA(n) + a 2'-deoxyribonucleoside 5'-triphosphate = DNA(n+1) + diphosphate. Functionally, in addition to polymerase activity, this DNA polymerase exhibits 3'-5' and 5'-3' exonuclease activity. It is able to utilize nicked circular duplex DNA as a template and can unwind the parental DNA strand from its template. This chain is DNA polymerase I (polA), found in Salmonella typhimurium (strain LT2 / SGSC1412 / ATCC 700720).